Reading from the N-terminus, the 872-residue chain is Armadillo repeat-containing protein 3 (872 aa).

ARM repeat units follow at residues 15 to 54, 57 to 96, 98 to 138, 140 to 179, 181 to 220, 222 to 262, 264 to 304, 306 to 345, 346 to 385, 388 to 427, 429 to 468, and 470 to 509; these read DVFD…KFAL, EENK…ILAS, NDVK…NMSA, YTSK…NLVQ, FQCR…VIAN, KESR…NCLE, MDTM…KAAY, PENR…AMCE, NSGS…NLTT, PANA…NMAM, EPLR…ATAC, and VEAR…VCAG. 2 S-palmitoyl cysteine lipidation sites follow: cysteine 507 and cysteine 518. The disordered stretch occupies residues 610–693; the sequence is VSPPSSMEDK…SKGKKEEEKV (84 aa). Residues 626 to 635 are compositionally biased toward low complexity; that stretch reads RSISSSSSLR. The span at 636-646 shows a compositional bias: basic residues; sequence RSSKEKNKKNS. The span at 675–693 shows a compositional bias: basic and acidic residues; it reads ATKEKGWRKSKGKKEEEKV.

As to quaternary structure, homodimer. Interacts with PIK3C3, PIK3R4 and BECN1. Interacts (via ARM domains) with ATG14. Palmitoylation is important for its function in autophagy. As to expression, expressed in skeletal muscle, brain, lung, kidney, prostate and testis. In terms of tissue distribution, mainly expressed in skeletal muscle, liver, spleen and thymus. Expressed only in the testis among normal tissues but is expressed frequently in various cancer tissues and, particularly, in pancreatic, lung and endometrial cancers.

Its function is as follows. Essential for male fertility and sperm motility. During spermatogenesis, promotes the autophagic degradation of excessive ribosomes, providing energy resources for mitochondria and thus ensuring sperm flagellar motility. The polypeptide is Armadillo repeat-containing protein 3 (ARMC3) (Homo sapiens (Human)).